The following is a 364-amino-acid chain: F-box protein At1g59680 (364 aa).

One can recognise an F-box domain in the interval 2 to 49 (TTMSDLSVDLVGEILSRVPLTSLSAVRCTCKSWNTLSKHQIFGKAELA).

The protein is F-box protein At1g59680 of Arabidopsis thaliana (Mouse-ear cress).